The following is a 153-amino-acid chain: Ribonuclease H (153 aa).

The RNase H type-1 domain maps to 1–142 (MRKKIEIFTD…CDELARIAAE (142 aa)). D10, E48, D70, and D134 together coordinate Mg(2+).

It belongs to the RNase H family. Monomer. Mg(2+) serves as cofactor.

It localises to the cytoplasm. The enzyme catalyses Endonucleolytic cleavage to 5'-phosphomonoester.. Functionally, endonuclease that specifically degrades the RNA of RNA-DNA hybrids. This Baumannia cicadellinicola subsp. Homalodisca coagulata protein is Ribonuclease H.